Reading from the N-terminus, the 674-residue chain is Protein kinase C delta type (674 aa).

Positions 1–106 (MAPFLRISFN…KNNGKAEFWL (106 aa)) constitute a C2 domain. T43 and T50 each carry phosphothreonine. The residue at position 64 (Y64) is a Phosphotyrosine. Residue S130 is modified to Phosphoserine. T141 carries the post-translational modification Phosphothreonine. Residue Y155 is modified to Phosphotyrosine. A Phorbol-ester/DAG-type 1 zinc finger spans residues 158-208 (NHEFIATFFGQPTFCSVCKEFVWGLNKQGYKCRQCNAAIHKKCIDKIIGRC). T218 carries the post-translational modification Phosphothreonine. A Phorbol-ester/DAG-type 2 zinc finger spans residues 230–280 (PHRFKVYNYMSPTFCDHCGSLLWGLVKQGLKCEDCGMNVHHKCREKVANLC). A Phosphoserine; by autocatalysis modification is found at S299. Phosphotyrosine; by SRC occurs at positions 311 and 332. Residues 347–601 (FTFQKVLGKG…TGNIRIHPFF (255 aa)) form the Protein kinase domain. 353 to 361 (LGKGSFGKV) is a binding site for ATP. A Phosphotyrosine modification is found at Y372. Position 376 (K376) interacts with ATP. The residue at position 449 (T449) is a Phosphothreonine. D471 serves as the catalytic Proton acceptor. Position 504 is a phosphoserine (S504). The residue at position 505 (T505) is a Phosphothreonine; by autocatalysis. Y565 is modified (phosphotyrosine). One can recognise an AGC-kinase C-terminal domain in the interval 602-673 (KTINWSLLEK…VNPKFEQFLD (72 aa)). Phosphoserine is present on residues S643, S652, and S662.

The protein belongs to the protein kinase superfamily. AGC Ser/Thr protein kinase family. PKC subfamily. As to quaternary structure, interacts with PDPK1 (via N-terminal region). Interacts with RAD9A. Interacts with CDCP1. Interacts with MUC1. Interacts with VASP. Interacts with CAVIN3. Interacts with PRKD2 (via N-terminus and zing-finger domain 1 and 2) in response to oxidative stress; the interaction is independent of PRKD2 tyrosine phosphorylation. Interacts with PLSC3; interaction is enhanced by UV irradiation. Post-translationally, autophosphorylated and/or phosphorylated at Thr-505, within the activation loop; phosphorylation at Thr-505 is not a prerequisite for enzymatic activity. Autophosphorylated at Ser-299. Upon TNFSF10/TRAIL treatment, phosphorylated at Tyr-155; phosphorylation is required for its translocation to the endoplasmic reticulum and cleavage by caspase-3. Phosphorylated at Tyr-311, Tyr-332 and Tyr-565; phosphorylation of Tyr-311 and Tyr-565 following thrombin or zymosan stimulation potentiates its kinase activity. Phosphorylated by protein kinase PDPK1; phosphorylation is inhibited by the apoptotic C-terminal cleavage product of PKN2. Phosphorylated at Tyr-311 through a SYK and SRC mechanism downstream of C-type lectin receptors activation, promoting its activation. Proteolytically cleaved into a catalytic subunit and a regulatory subunit by caspase-3 during apoptosis which results in kinase activation. As to expression, isoform 1 is highly expressed in developing pro- and pre-B-cells and moderately in mature T-cells. Isoform 2 is highly expressed in testis and ovary and at a lower level in thymocytes, brain and kidney.

The protein resides in the cytoplasm. Its subcellular location is the perinuclear region. The protein localises to the nucleus. It localises to the cell membrane. It is found in the mitochondrion. The protein resides in the endomembrane system. The enzyme catalyses L-seryl-[protein] + ATP = O-phospho-L-seryl-[protein] + ADP + H(+). It carries out the reaction L-threonyl-[protein] + ATP = O-phospho-L-threonyl-[protein] + ADP + H(+). The catalysed reaction is L-tyrosyl-[protein] + ATP = O-phospho-L-tyrosyl-[protein] + ADP + H(+). With respect to regulation, novel PKCs (PRKCD, PRKCE, PRKCH and PRKCQ) are calcium-insensitive, but activated by diacylglycerol (DAG) and phosphatidylserine. Three specific sites; Thr-505 (activation loop of the kinase domain), Ser-643 (turn motif) and Ser-662 (hydrophobic region), need to be phosphorylated for its full activation. Activated by caspase-3 (CASP3) cleavage during apoptosis. After cleavage, the pseudosubstrate motif in the regulatory subunit is released from the substrate recognition site of the catalytic subunit, which enables PRKCD to become constitutively activated. The catalytic subunit which displays properties of a sphingosine-dependent protein kinase is activated by D-erythro-sphingosine (Sph) or N,N-dimethyl-D-erythrosphingosine (DMS) or N,N,N-trimethyl-D-erythrosphingosine (TMS), but not by ceramide or Sph-1-P and is strongly inhibited by phosphatidylserine. Calcium-independent, phospholipid- and diacylglycerol (DAG)-dependent serine/threonine-protein kinase that plays contrasting roles in cell death and cell survival by functioning as a pro-apoptotic protein during DNA damage-induced apoptosis, but acting as an anti-apoptotic protein during cytokine receptor-initiated cell death, is involved in tumor suppression, is required for oxygen radical production by NADPH oxidase and acts as a positive or negative regulator in platelet functional responses. Negatively regulates B cell proliferation and also has an important function in self-antigen induced B cell tolerance induction. Upon DNA damage, activates the promoter of the death-promoting transcription factor BCLAF1/Btf to trigger BCLAF1-mediated p53/TP53 gene transcription and apoptosis. In response to oxidative stress, interact with and activate CHUK/IKKA in the nucleus, causing the phosphorylation of p53/TP53. In the case of ER stress or DNA damage-induced apoptosis, can form a complex with the tyrosine-protein kinase ABL1 which trigger apoptosis independently of p53/TP53. In cytosol can trigger apoptosis by activating MAPK11 or MAPK14, inhibiting AKT1 and decreasing the level of X-linked inhibitor of apoptosis protein (XIAP), whereas in nucleus induces apoptosis via the activation of MAPK8 or MAPK9. Upon ionizing radiation treatment, is required for the activation of the apoptosis regulators BAX and BAK, which trigger the mitochondrial cell death pathway. Can phosphorylate MCL1 and target it for degradation which is sufficient to trigger for BAX activation and apoptosis. Is required for the control of cell cycle progression both at G1/S and G2/M phases. Mediates phorbol 12-myristate 13-acetate (PMA)-induced inhibition of cell cycle progression at G1/S phase by up-regulating the CDK inhibitor CDKN1A/p21 and inhibiting the cyclin CCNA2 promoter activity. In response to UV irradiation can phosphorylate CDK1, which is important for the G2/M DNA damage checkpoint activation. Can protect glioma cells from the apoptosis induced by TNFSF10/TRAIL, probably by inducing increased phosphorylation and subsequent activation of AKT1. Can also act as tumor suppressor upon mitogenic stimulation with PMA or TPA. In N-formyl-methionyl-leucyl-phenylalanine (fMLP)-treated cells, is required for NCF1 (p47-phox) phosphorylation and activation of NADPH oxidase activity, and regulates TNF-elicited superoxide anion production in neutrophils, by direct phosphorylation and activation of NCF1 or indirectly through MAPK1/3 (ERK1/2) signaling pathways. Involved in antifungal immunity by mediating phosphorylation and activation of CARD9 downstream of C-type lectin receptors activation, promoting interaction between CARD9 and BCL10, followed by activation of NF-kappa-B and MAP kinase p38 pathways. May also play a role in the regulation of NADPH oxidase activity in eosinophil after stimulation with IL5, leukotriene B4 or PMA. In collagen-induced platelet aggregation, acts a negative regulator of filopodia formation and actin polymerization by interacting with and negatively regulating VASP phosphorylation. Downstream of PAR1, PAR4 and CD36/GP4 receptors, regulates differentially platelet dense granule secretion; acts as a positive regulator in PAR-mediated granule secretion, whereas it negatively regulates CD36/GP4-mediated granule release. Phosphorylates MUC1 in the C-terminal and regulates the interaction between MUC1 and beta-catenin. The catalytic subunit phosphorylates 14-3-3 proteins (YWHAB, YWHAZ and YWHAH) in a sphingosine-dependent fashion. Phosphorylates ELAVL1 in response to angiotensin-2 treatment. Phosphorylates mitochondrial phospholipid scramblase 3 (PLSCR3), resulting in increased cardiolipin expression on the mitochondrial outer membrane which facilitates apoptosis. Phosphorylates SMPD1 which induces SMPD1 secretion. This Mus musculus (Mouse) protein is Protein kinase C delta type.